The following is a 483-amino-acid chain: Regulatory protein ViaA (483 aa).

It belongs to the ViaA family. In terms of assembly, homodimer. Interacts with RavA.

The protein localises to the cytoplasm. Component of the RavA-ViaA chaperone complex, which may act on the membrane to optimize the function of some of the respiratory chains. ViaA stimulates the ATPase activity of RavA. In Escherichia coli O17:K52:H18 (strain UMN026 / ExPEC), this protein is Regulatory protein ViaA.